The sequence spans 436 residues: GTPase Der (436 aa).

2 consecutive EngA-type G domains span residues 4–167 (PTVA…PVEE) and 175–351 (IRFS…ESQN). GTP contacts are provided by residues 10-17 (GRPNVGKS), 57-61 (DTGGI), 119-122 (NKVD), 181-188 (GRPNVGKS), 229-233 (DTAGM), and 294-297 (NKWD). One can recognise a KH-like domain in the interval 352–436 (KRIPSAVLND…PIHLIARKRK (85 aa)).

This sequence belongs to the TRAFAC class TrmE-Era-EngA-EngB-Septin-like GTPase superfamily. EngA (Der) GTPase family. In terms of assembly, associates with the 50S ribosomal subunit.

Functionally, GTPase that plays an essential role in the late steps of ribosome biogenesis. This is GTPase Der from Streptococcus pyogenes serotype M3 (strain ATCC BAA-595 / MGAS315).